Reading from the N-terminus, the 705-residue chain is Cell cycle serine/threonine-protein kinase CDC5/MSD2 (705 aa).

Position 23 is a phosphothreonine (Thr-23). The span at 41-53 (QTKRLDPNNDHHH) shows a compositional bias: basic and acidic residues. The disordered stretch occupies residues 41-63 (QTKRLDPNNDHHHQPAQKKKREK). One can recognise a Protein kinase domain in the interval 82 to 337 (YHRGHFLGEG…LTEIMDYVWF (256 aa)). ATP contacts are provided by residues 88–96 (LGEGGFARC) and Lys-110. The Proton acceptor role is filled by Asp-204. Residue Ser-419 is modified to Phosphoserine. The POLO box 1 domain occupies 513-595 (IVTKWVDYSN…VDFFAKYMKA (83 aa)). Zn(2+)-binding residues include Glu-553, His-569, His-609, and Asp-612. Residues 614-700 (FLRRYTRYKP…IKEGLKQKST (87 aa)) form the POLO box 2 domain.

Belongs to the protein kinase superfamily. Ser/Thr protein kinase family. CDC5/Polo subfamily. As to quaternary structure, interacts with CDC48; the interaction is likely to result in CDC5 degradation. Interacts with CSA1.

It localises to the cytoplasm. It is found in the cytoskeleton. The protein localises to the microtubule organizing center. Its subcellular location is the spindle pole body. The enzyme catalyses L-seryl-[protein] + ATP = O-phospho-L-seryl-[protein] + ADP + H(+). The catalysed reaction is L-threonyl-[protein] + ATP = O-phospho-L-threonyl-[protein] + ADP + H(+). In terms of biological role, protein kinase required for the cell cycle where it is involved in mitotic exit. A component of the fear (CDC14 early anaphase release) network which promotes CDC14 release from the nucleolus during early anaphase. Phosphorylates SCC1/MCD1 and NET1. The polypeptide is Cell cycle serine/threonine-protein kinase CDC5/MSD2 (CDC5) (Saccharomyces cerevisiae (strain ATCC 204508 / S288c) (Baker's yeast)).